A 173-amino-acid chain; its full sequence is Crossover junction endodeoxyribonuclease RuvC (173 aa).

Active-site residues include D8, E67, and D139. Mg(2+)-binding residues include D8, E67, and D139.

It belongs to the RuvC family. As to quaternary structure, homodimer which binds Holliday junction (HJ) DNA. The HJ becomes 2-fold symmetrical on binding to RuvC with unstacked arms; it has a different conformation from HJ DNA in complex with RuvA. In the full resolvosome a probable DNA-RuvA(4)-RuvB(12)-RuvC(2) complex forms which resolves the HJ. Mg(2+) is required as a cofactor.

It localises to the cytoplasm. It catalyses the reaction Endonucleolytic cleavage at a junction such as a reciprocal single-stranded crossover between two homologous DNA duplexes (Holliday junction).. Functionally, the RuvA-RuvB-RuvC complex processes Holliday junction (HJ) DNA during genetic recombination and DNA repair. Endonuclease that resolves HJ intermediates. Cleaves cruciform DNA by making single-stranded nicks across the HJ at symmetrical positions within the homologous arms, yielding a 5'-phosphate and a 3'-hydroxyl group; requires a central core of homology in the junction. The consensus cleavage sequence is 5'-(A/T)TT(C/G)-3'. Cleavage occurs on the 3'-side of the TT dinucleotide at the point of strand exchange. HJ branch migration catalyzed by RuvA-RuvB allows RuvC to scan DNA until it finds its consensus sequence, where it cleaves and resolves the cruciform DNA. This chain is Crossover junction endodeoxyribonuclease RuvC, found in Shigella flexneri serotype 5b (strain 8401).